Reading from the N-terminus, the 608-residue chain is Dextranase (608 aa).

A signal peptide spans 1-19 (MATMLKLLALTLAISESAI). Residues 20–34 (GAVMHPPGNSHPGTH) constitute a propeptide that is removed on maturation. 3 N-linked (GlcNAc...) asparagine glycosylation sites follow: Asn39, Asn571, and Asn574.

The protein belongs to the glycosyl hydrolase 49 family. In terms of processing, N-glycosylated.

The protein resides in the secreted. It catalyses the reaction Endohydrolysis of (1-&gt;6)-alpha-D-glucosidic linkages in dextran.. This Talaromyces minioluteus (Filamentous fungus) protein is Dextranase (DEX).